The chain runs to 313 residues: Sororin-like protein 1 (313 aa).

Positions 44–46 match the FGF motif motif; the sequence is FGF. The segment at 105–287 is disordered; the sequence is ADENQQSVPT…NDNLKELTPG (183 aa). Residues 107-118 show a composition bias toward polar residues; the sequence is ENQQSVPTVSIA. Over residues 123-134 the composition is skewed to pro residues; it reads PELPPSSSPLLP. Positions 135 to 154 are enriched in low complexity; the sequence is PNGSESSSPIPLSLLSTSSL. Residues 155-170 are compositionally biased toward polar residues; the sequence is QQRKITPSNLSNTSKP. Residues 184–196 are compositionally biased toward basic residues; it reads HGHHLTRLRKKRR. Positions 249-264 are enriched in basic and acidic residues; it reads EKKILKTYHSQDKDTA. A C-terminal Sororin domain region spans residues 288–310; it reads KKEYLKSIKKYFQDVDDYQLHVV.

It belongs to the sororin family. In terms of assembly, interacts with Pds5 and Psm3.

It is found in the nucleus. Its function is as follows. Regulator of sister chromatid cohesion in mitosis stabilizing cohesin complex association with chromatin. Antagonizes the action of wpl1 which stimulates cohesin dissociation from chromatin. Cohesion ensures that chromosome partitioning is accurate in dividing cells and may play an important role in DNA repair. The polypeptide is Sororin-like protein 1 (Schizosaccharomyces pombe (strain 972 / ATCC 24843) (Fission yeast)).